Reading from the N-terminus, the 388-residue chain is Valine--pyruvate aminotransferase (388 aa).

Lys234 carries the N6-(pyridoxal phosphate)lysine modification.

Belongs to the class-I pyridoxal-phosphate-dependent aminotransferase family. Pyridoxal 5'-phosphate serves as cofactor.

It catalyses the reaction L-valine + pyruvate = 3-methyl-2-oxobutanoate + L-alanine. The protein is Valine--pyruvate aminotransferase of Mycobacterium tuberculosis (strain ATCC 25618 / H37Rv).